A 255-amino-acid polypeptide reads, in one-letter code: NAD kinase (255 aa).

The Proton acceptor role is filled by Asp44. NAD(+)-binding positions include 44-45 (DG), His49, 114-115 (NE), Asp144, Ala152, 155-160 (SAYNLS), and Gln216.

Belongs to the NAD kinase family. It depends on a divalent metal cation as a cofactor.

It localises to the cytoplasm. It carries out the reaction NAD(+) + ATP = ADP + NADP(+) + H(+). Functionally, involved in the regulation of the intracellular balance of NAD and NADP, and is a key enzyme in the biosynthesis of NADP. Catalyzes specifically the phosphorylation on 2'-hydroxyl of the adenosine moiety of NAD to yield NADP. In Rickettsia africae (strain ESF-5), this protein is NAD kinase.